Here is a 436-residue protein sequence, read N- to C-terminus: UDP-N-acetylglucosamine 1-carboxyvinyltransferase (436 aa).

Position 22–23 (22–23 (KN)) interacts with phosphoenolpyruvate. Residue Arg96 coordinates UDP-N-acetyl-alpha-D-glucosamine. Catalysis depends on Cys120, which acts as the Proton donor. Cys120 is subject to 2-(S-cysteinyl)pyruvic acid O-phosphothioketal. UDP-N-acetyl-alpha-D-glucosamine-binding positions include 125-129 (RPIDL), Asp309, and Ile331.

This sequence belongs to the EPSP synthase family. MurA subfamily.

It is found in the cytoplasm. It catalyses the reaction phosphoenolpyruvate + UDP-N-acetyl-alpha-D-glucosamine = UDP-N-acetyl-3-O-(1-carboxyvinyl)-alpha-D-glucosamine + phosphate. The protein operates within cell wall biogenesis; peptidoglycan biosynthesis. Functionally, cell wall formation. Adds enolpyruvyl to UDP-N-acetylglucosamine. The protein is UDP-N-acetylglucosamine 1-carboxyvinyltransferase of Acidobacterium capsulatum (strain ATCC 51196 / DSM 11244 / BCRC 80197 / JCM 7670 / NBRC 15755 / NCIMB 13165 / 161).